Reading from the N-terminus, the 113-residue chain is Putative membrane protein insertion efficiency factor (113 aa).

Belongs to the UPF0161 family.

The protein localises to the cell inner membrane. Could be involved in insertion of integral membrane proteins into the membrane. This is Putative membrane protein insertion efficiency factor from Campylobacter curvus (strain 525.92).